The chain runs to 566 residues: Erythroid membrane-associated protein (566 aa).

A signal peptide spans 1-29 (MERPSPCGSWLVGCLFTIAVFQPPVQVLG). The Ig-like V-type domain maps to 30–139 (DAGKVYIAPL…SSREDNVTLQ (110 aa)). Residues 30–246 (DAGKVYIAPL…PERGSLSSPA (217 aa)) lie on the Extracellular side of the membrane. C47 and C123 are joined by a disulfide. N-linked (GlcNAc...) asparagine glycosylation is found at N135 and N214. Residues 247 to 267 (VALSVVLPVLGLLILLGIWLI) traverse the membrane as a helical segment. Topologically, residues 268 to 566 (CKQKKSKEKL…ALKGLKVPSL (299 aa)) are cytoplasmic. A B30.2/SPRY domain is found at 311–509 (KLKRAAANAG…LIICTELQKS (199 aa)). At S509 the chain carries Phosphoserine.

Belongs to the immunoglobulin superfamily. BTN/MOG family. Post-translationally, glycosylated. As to expression, expressed in spleen and bone marrow.

The protein resides in the cell membrane. Its subcellular location is the cytoplasm. Its function is as follows. Possible role as a cell-adhesion or receptor molecule of erythroid cells. This is Erythroid membrane-associated protein (Ermap) from Mus musculus (Mouse).